The sequence spans 1477 residues: Neurexin-1 (1477 aa).

A signal peptide spans 1-30; that stretch reads MGTALLQRGGCFLLCLSLLLLGCWAELGSG. A Laminin G-like 1 domain is found at 31–217; sequence LEFPGAEGQW…PPNSGGGSPC (187 aa). Over 31–1401 the chain is Extracellular; it reads LEFPGAEGQW…EVIRESSSTT (1371 aa). Residues asparagine 125 and asparagine 190 are each glycosylated (N-linked (GlcNAc...) asparagine). The segment at 198–221 is disordered; that stretch reads DSGEVKLDDEPPNSGGGSPCEAGE. Positions 213–256 constitute an EGF-like 1 domain; it reads GGSPCEAGEEGEGGVCLNGGVCSVVDDQAVCDCSRTGFRGKDCS. Disulfide bonds link cysteine 228-cysteine 243 and cysteine 245-cysteine 255. 2 Laminin G-like domains span residues 283–473 and 480–672; these read IATF…AFKC and DPIT…KPSC. Ca(2+) contacts are provided by aspartate 329, leucine 346, and methionine 407. 5 disulfides stabilise this stretch: cysteine 437–cysteine 473, cysteine 643–cysteine 672, cysteine 680–cysteine 691, cysteine 685–cysteine 700, and cysteine 702–cysteine 712. The 38-residue stretch at 676–713 folds into the EGF-like 2 domain; the sequence is TAKPCLSNPCKNNGMCRDGWNRYVCDCSGTGYLGRSCE. Laminin G-like domains are found at residues 718–891 and 905–1080; these read VLSY…IDYC and DPVT…ERGC. Ca(2+) is bound by residues aspartate 765 and leucine 782. An N-linked (GlcNAc...) asparagine glycan is attached at asparagine 790. Position 841 (arginine 841) interacts with Ca(2+). 5 disulfide bridges follow: cysteine 883–cysteine 891, cysteine 1052–cysteine 1080, cysteine 1087–cysteine 1098, cysteine 1092–cysteine 1107, and cysteine 1109–cysteine 1119. The 38-residue stretch at 1083-1120 folds into the EGF-like 3 domain; the sequence is PSTTCQEDSCSNQGVCLQQWDGFSCDCSMTSFSGPLCN. A Laminin G-like 6 domain is found at 1126 to 1294; sequence YIFSKGGGQI…DANIAIVGNV (169 aa). The Ca(2+) site is built by aspartate 1176 and valine 1193. An N-linked (GlcNAc...) asparagine glycan is attached at asparagine 1223. 2 residues coordinate Ca(2+): isoleucine 1245 and asparagine 1247. Positions 1325-1390 are disordered; it reads TTTLATSTAR…AGGREPYPGS (66 aa). Residue serine 1355 is glycosylated (O-linked (Xyl...) (heparan sulfate) serine). A helical transmembrane segment spans residues 1402-1422; the sequence is GMVVGIVAAAALCILILLYAM. Residues 1423–1477 lie on the Cytoplasmic side of the membrane; it reads YKYRNRDEGSYHVDESRNYISNSAQSNGAVVKEKQPSSAKSSNKNKKNKDKEYYV. Residues 1444 to 1470 form an interaction with CASK region; that stretch reads NSAQSNGAVVKEKQPSSAKSSNKNKKN. The tract at residues 1444-1477 is disordered; it reads NSAQSNGAVVKEKQPSSAKSSNKNKKNKDKEYYV.

This sequence belongs to the neurexin family. In terms of assembly, interacts (via laminin G-like domain 2 and/or laminin G-like domain 6) with NLGN1 forming a heterotetramer, where one NLGN1 dimer interacts with one NRXN1 dimer. Also interacts (via laminin G-like domain 2 and/or laminin G-like domain 6) with NLGN2, NLGN3 and NLGN4L; interactions with NLGN1, NLGN2, NLGN3 and NLGN4L are calcium-dependent. Interacts (via cytoplasmic C-terminal region) with CASK (via the PDZ, SH3 and guanylate kinase-like domains). Interacts (via cytoplasmic C-terminus) with CASKIN1 and APBA1. Interacts (via laminin G-like domain 2) with NXPH1 and NXPH3. Alpha-type isoforms (neurexin-1-alpha) interact (via laminin G-like domain 2 and/or laminin G-like domain 6) with DAG1 (via alpha-dystroglycan chain). Interacts with LRRTM1, LRRTM2, LRRTM3 and LRRTM4. Interacts with SYT13 and SYTL1. Interacts with CBLN1, CBLN2 and, less avidly, with CBLN4. Interacts with CLSTN3. In terms of processing, O-glycosylated; contains heparan sulfate. Heparan sulfate attachment is required for synapse development by mediating interactions with neuroligins and LRRTM2. As to expression, brain.

It localises to the presynaptic cell membrane. Functionally, cell surface protein involved in cell-cell-interactions, exocytosis of secretory granules and regulation of signal transmission. Function is isoform-specific. Alpha-type isoforms have a long N-terminus with six laminin G-like domains and play an important role in synaptic signal transmission. Alpha-type isoforms play a role in the regulation of calcium channel activity and Ca(2+)-triggered neurotransmitter release at synapses and at neuromuscular junctions. They play an important role in Ca(2+)-triggered exocytosis of secretory granules in pituitary gland. They may affect their functions at synapses and in endocrine cells via their interactions with proteins from the exocytotic machinery. Likewise, alpha-type isoforms play a role in regulating the activity of postsynaptic NMDA receptors, a subtype of glutamate-gated ion channels. Both alpha-type and beta-type isoforms may play a role in the formation or maintenance of synaptic junctions via their interactions (via the extracellular domains) with neuroligin family members, CBLN1 or CBLN2. In vitro, triggers the de novo formation of presynaptic structures. May be involved in specification of excitatory synapses. Alpha-type isoforms were first identified as receptors for alpha-latrotoxin from spider venom. In Homo sapiens (Human), this protein is Neurexin-1 (NRXN1).